The following is a 357-amino-acid chain: Inner membrane protein YcfT (357 aa).

The Cytoplasmic segment spans residues 1–12 (MKQKELWINQIK). The helical transmembrane segment at 13–33 (GLCICLVVIYHSVITFYPHLT) threads the bilayer. At 34-49 (TFQHPLSEVLSKCWIY) the chain is on the periplasmic side. A helical transmembrane segment spans residues 50 to 70 (FNLYLAPFRMPVFFFISGYLI). Over 71-86 (RRYIDSVPWGNCLDKR) the chain is Cytoplasmic. The chain crosses the membrane as a helical span at residues 87–107 (IWNIFWVLALWGVVQWLALSA). Over 108 to 135 (LNQWLAPERDLSNASNAAYADSTGEFLH) the chain is Periplasmic. Residues 136–156 (GMITASTSLWYLYALIVYFVV) form a helical membrane-spanning segment. Topologically, residues 157–162 (CKIFSR) are cytoplasmic. The chain crosses the membrane as a helical span at residues 163 to 183 (LALPLFALFVLLSVAVNFVPT). Residues 184–196 (PWWGMNSVIRNLP) lie on the Periplasmic side of the membrane. A helical membrane pass occupies residues 197-217 (YYSLGAWFGATIMTCVKEVPL). Residues 218-231 (RRHLLMASLLTVLA) lie on the Cytoplasmic side of the membrane. Residues 232–252 (VGAWLFTISLLLSLVSIVVIM) traverse the membrane as a helical segment. At 253-310 (KLFYQYEQRFGMRSTSLLNVIGSNTIAIYTTHRILVEIFSLTLLAQMNAARWSPQVEL) the chain is on the periplasmic side. The chain crosses the membrane as a helical span at residues 311-331 (TLLLVYPFVSLFICTVAGLLV). Residues 332 to 357 (RKLSQRAFSDLLFSPPSLPAAVSYSR) lie on the Cytoplasmic side of the membrane.

This sequence belongs to the acyltransferase 3 family.

The protein localises to the cell inner membrane. In Escherichia coli (strain K12), this protein is Inner membrane protein YcfT (ycfT).